We begin with the raw amino-acid sequence, 398 residues long: Streptopain (398 aa).

The N-terminal stretch at 1–27 (MNKKKLGIRLLSLLALGGFVLANPVFA) is a signal peptide. Residues 28 to 145 (DQNFARNEKE…TTYAGTAEIK (118 aa)) constitute a propeptide that is removed on maturation. The active-site Nucleophile is the Cys192. Cysteine methyl disulfide; in zymogen form is present on Cys192. A protein is bound by residues Ser282 and Gly339. Catalysis depends on His340, which acts as the Proton acceptor. Residues 368–390 (RLDALNPSALGTGGGAGGFNGYQ) are C-terminal active site loop.

This sequence belongs to the peptidase C10 family. As to quaternary structure, monomer. The mature protease is derived from the precursor sequence by cleavage, either in cis via an autocatalytic mechanism, or in trans by mature SpeB or host proteases (trypsin, plasmin or subtilisin). Maturation can involve a number of protein cleavage intermediates. Mature SpeB probably plays the most important role in protein maturation in physiological conditions. In terms of processing, methylthiolation at Cys-192 of the inactive zymogen form is probably involved in the mechanism of secretion of the proteinase into the culture fluid.

The protein localises to the secreted. Its subcellular location is the host extracellular space. It localises to the host cytoplasm. It catalyses the reaction Preferential cleavage with hydrophobic residues at P2, P1 and P1'.. Its activity is regulated as follows. Synthesized as an inactive zymogen to protect the intracellular components of the bacteria from proteolytic activity during protein production. Once secreted into the extracellular milieu, cleaved into the active protease: maturation can be mediated in cis by autocatalytic cleavage, or in trans by mature SpeB or host proteases. Protease activity is strongly inhibited by zinc and copper, which prevent its maturation into an active protease: inhibition by metal ions may be required to prevent proteolysis of streptococcal proteins. Functionally, cysteine protease that acts as a key streptococcal virulence factor by cleaving host proteins involved in immune response. Triggers inflammation by mediating cleavage of host proteins, which can both promote host pathogenesis by triggering sterile inflammation and/or restrict streptococcal infection, depending on host immune statue and infection site. Cleaves host gasdermin-A (GSDMA) in epithelial cells, promoting GSDMA activation and formation of gasdermin pores, triggering pyroptosis. Pyroptosis triggers the elimination of the infected skin cell, depriving the pathogen of its protective niche, while inducing an inflammatory response. This ultimately prevents bacterial penetration of the epithelial barrier and a subsequent systemic dissemination of the pathogen. Also mediates cleavage of the cytokine precursor interleukin-1 beta (IL1B) to its mature form, resulting in inflammation and septic shock. SpeB-mediated maturation of IL1B plays a dual role depending on infection site: while IL1B inflammatory response prevents bacterial growth during invasive skin infections, it promotes streptococcal infection of the nasopharynx by disrupting colonization resistance mediated by the microbiota. Inhibits host autophagy be catalyzing cleavage and inactivation of key autophagy factors, such as CALCOCO2, NBR1 and SQSTM1. Cleaves and inhibits a number of complement factors, such as C2, C3-beta chain of C3, C4, C5 or SERPING1, thereby promoting evasion of host immunity. May also impair adaptive immunity by catalyzing cleavage and degradation of host immunoglobulins to promote immune system evasion; the relevance of this activity is however unsure in vivo. Catalyzes maturation and release of the peptide hormone bradykinin from the precursor Kininogen-1 (KNG1) to produce hypotension during septic shock. Also involved in bacterial translocation across the host epithelial barrier by mediating cleavage and degradation of host epithelial junction proteins, such as CDH1 and OCLN. Additionally, has been involved in degradation of fibronectin and vitronectin, two host extracellular matrix proteins involved in tissue integrity. Also able to catalyze cleavage and degradation of streptococcal proteins, such as C5a peptidase, EndoS or SmeZ. Degradation of streptococcal proteins is however strictly regulated to preserve integrity of other virulence factors. This chain is Streptopain (speB), found in Streptococcus pyogenes serotype M28 (strain MGAS6180).